The sequence spans 311 residues: Aspartate carbamoyltransferase catalytic subunit (311 aa).

Carbamoyl phosphate is bound by residues Arg59 and Thr60. Position 87 (Lys87) interacts with L-aspartate. Carbamoyl phosphate is bound by residues Arg109, His139, and Gln142. Positions 172 and 224 each coordinate L-aspartate. Carbamoyl phosphate-binding residues include Ala265 and Pro266.

The protein belongs to the aspartate/ornithine carbamoyltransferase superfamily. ATCase family. As to quaternary structure, heterododecamer (2C3:3R2) of six catalytic PyrB chains organized as two trimers (C3), and six regulatory PyrI chains organized as three dimers (R2).

The catalysed reaction is carbamoyl phosphate + L-aspartate = N-carbamoyl-L-aspartate + phosphate + H(+). It participates in pyrimidine metabolism; UMP biosynthesis via de novo pathway; (S)-dihydroorotate from bicarbonate: step 2/3. In terms of biological role, catalyzes the condensation of carbamoyl phosphate and aspartate to form carbamoyl aspartate and inorganic phosphate, the committed step in the de novo pyrimidine nucleotide biosynthesis pathway. The protein is Aspartate carbamoyltransferase catalytic subunit of Streptococcus equi subsp. zooepidemicus (strain MGCS10565).